A 301-amino-acid polypeptide reads, in one-letter code: L-threonate dehydrogenase (301 aa).

Residues 6-34 (YSVAVIGLGSMGMGAAVSCINAGLTTYGI) and Thr101 contribute to the NAD(+) site. Lys177 is an active-site residue. Lys245 contacts NAD(+).

It belongs to the HIBADH-related family. L-threonate dehydrogenase subfamily.

It catalyses the reaction L-threonate + NAD(+) = 2-dehydro-L-erythronate + NADH + H(+). Functionally, catalyzes oxidation of L-threonate to 2-oxo-tetronate. Can use either NAD(+) or NADP(+) as cosubstrate, with a preference for NAD(+). The chain is L-threonate dehydrogenase from Haemophilus influenzae (strain ATCC 51907 / DSM 11121 / KW20 / Rd).